The chain runs to 63 residues: Large ribosomal subunit protein uL29 (63 aa).

The protein belongs to the universal ribosomal protein uL29 family.

The chain is Large ribosomal subunit protein uL29 (rpmC) from Buchnera aphidicola subsp. Acyrthosiphon kondoi (Acyrthosiphon kondoi symbiotic bacterium).